The sequence spans 456 residues: Flagellum-specific ATP synthase (456 aa).

ATP is bound at residue 182–189 (AGSGVGKS).

This sequence belongs to the ATPase alpha/beta chains family.

The protein localises to the cytoplasm. It carries out the reaction ATP + H2O + 4 H(+)(in) = ADP + phosphate + 5 H(+)(out). Functionally, probable catalytic subunit of a protein translocase for flagellum-specific export, or a proton translocase involved in local circuits at the flagellum. May be involved in a specialized protein export pathway that proceeds without signal peptide cleavage. The polypeptide is Flagellum-specific ATP synthase (fliI) (Salmonella typhimurium (strain LT2 / SGSC1412 / ATCC 700720)).